We begin with the raw amino-acid sequence, 398 residues long: Tyrosine--tRNA ligase (398 aa).

Residues 48–57 (PTGADIHLGH) carry the 'HIGH' region motif. The 'KMSKS' region signature appears at 235–239 (KMSKS). Lysine 238 is an ATP binding site. One can recognise an S4 RNA-binding domain in the interval 334–398 (VKLAYLLGAT…GKNKFVRLVL (65 aa)).

Belongs to the class-I aminoacyl-tRNA synthetase family. TyrS type 2 subfamily. In terms of assembly, homodimer.

It is found in the cytoplasm. It carries out the reaction tRNA(Tyr) + L-tyrosine + ATP = L-tyrosyl-tRNA(Tyr) + AMP + diphosphate + H(+). Catalyzes the attachment of tyrosine to tRNA(Tyr) in a two-step reaction: tyrosine is first activated by ATP to form Tyr-AMP and then transferred to the acceptor end of tRNA(Tyr). The protein is Tyrosine--tRNA ligase of Trichormus variabilis (strain ATCC 29413 / PCC 7937) (Anabaena variabilis).